Here is a 378-residue protein sequence, read N- to C-terminus: Protein RecA (378 aa).

Residue 65 to 72 (GPESSGKT) participates in ATP binding. Residues 325-378 (AYGMDQTGEEDDQADDKSKDKATKPSDKSQAQAKPKKPVATETSLDLDDSKTDK) form a disordered region. Residues 339 to 351 (DDKSKDKATKPSD) are compositionally biased toward basic and acidic residues.

It belongs to the RecA family.

Its subcellular location is the cytoplasm. Can catalyze the hydrolysis of ATP in the presence of single-stranded DNA, the ATP-dependent uptake of single-stranded DNA by duplex DNA, and the ATP-dependent hybridization of homologous single-stranded DNAs. It interacts with LexA causing its activation and leading to its autocatalytic cleavage. The protein is Protein RecA of Lactiplantibacillus pentosus (Lactobacillus pentosus).